We begin with the raw amino-acid sequence, 562 residues long: NAD-dependent malic enzyme (562 aa).

Residue Y101 is the Proton donor of the active site. R154 contributes to the NAD(+) binding site. Residue K172 is the Proton acceptor of the active site. E243, D244, and D267 together coordinate a divalent metal cation. Residues D267 and N415 each contribute to the NAD(+) site.

The protein belongs to the malic enzymes family. In terms of assembly, homotetramer. The cofactor is Mg(2+). Requires Mn(2+) as cofactor.

The catalysed reaction is (S)-malate + NAD(+) = pyruvate + CO2 + NADH. The enzyme catalyses oxaloacetate + H(+) = pyruvate + CO2. The chain is NAD-dependent malic enzyme from Shewanella piezotolerans (strain WP3 / JCM 13877).